Reading from the N-terminus, the 278-residue chain is MELKNIIFDLDGTLLSSNQIPLEQTVEFLKDLQKKGIRITFASGRSHILIRNTATFITPNLPVISSNGALVYDFASEKPVHIKPIDNKVIPAIMQMLLEFQETFYFYTDKKVFAFTHELDSAKILSTRSQIVGIDLIENNYIVNKFEKALDFDFKQHTITKILLVTKNREKVPFLAKQLDQIQDINYVSSMTFALDIMQKDVNKAYGLKVLVDNYNLDPEKTMVFGDADNDVEIFQSVKWPVALVNGTDLAKKNAKFITEYDNNHNGIYFFLKKFLAT.

Aspartate 9 acts as the Nucleophile in catalysis. Aspartate 9 lines the Mg(2+) pocket. Phosphate is bound at residue leucine 10. A Mg(2+)-binding site is contributed by aspartate 11. Phosphate-binding positions include 43-44 (SG) and lysine 204. Aspartate 227 provides a ligand contact to Mg(2+). Residue asparagine 230 participates in phosphate binding.

This sequence belongs to the HAD-like hydrolase superfamily. Cof family. The cofactor is Mg(2+).

This is Putative phosphatase MG265 from Mycoplasma genitalium (strain ATCC 33530 / DSM 19775 / NCTC 10195 / G37) (Mycoplasmoides genitalium).